A 342-amino-acid polypeptide reads, in one-letter code: Glycerol-3-phosphate dehydrogenase [NAD(P)+] (342 aa).

NADPH-binding residues include tryptophan 11, arginine 33, and lysine 107. Positions 107, 143, and 145 each coordinate sn-glycerol 3-phosphate. Alanine 147 is a binding site for NADPH. The sn-glycerol 3-phosphate site is built by lysine 198, aspartate 251, serine 261, arginine 262, and asparagine 263. Catalysis depends on lysine 198, which acts as the Proton acceptor. Arginine 262 is a binding site for NADPH. Residues valine 286 and glutamate 288 each coordinate NADPH.

The protein belongs to the NAD-dependent glycerol-3-phosphate dehydrogenase family.

Its subcellular location is the cytoplasm. It carries out the reaction sn-glycerol 3-phosphate + NAD(+) = dihydroxyacetone phosphate + NADH + H(+). The enzyme catalyses sn-glycerol 3-phosphate + NADP(+) = dihydroxyacetone phosphate + NADPH + H(+). It participates in membrane lipid metabolism; glycerophospholipid metabolism. Catalyzes the reduction of the glycolytic intermediate dihydroxyacetone phosphate (DHAP) to sn-glycerol 3-phosphate (G3P), the key precursor for phospholipid synthesis. This chain is Glycerol-3-phosphate dehydrogenase [NAD(P)+], found in Paracidovorax citrulli (strain AAC00-1) (Acidovorax citrulli).